We begin with the raw amino-acid sequence, 338 residues long: Glyceraldehyde-3-phosphate dehydrogenase 2 (338 aa).

Residues 13–14 and Gly111 contribute to the NAD(+) site; that span reads TI. Residue 140–142 coordinates D-glyceraldehyde 3-phosphate; the sequence is SCN. Cys141 (nucleophile) is an active-site residue. NAD(+) is bound at residue Arg169. Position 195-196 (195-196) interacts with D-glyceraldehyde 3-phosphate; sequence HG. Gln300 serves as a coordination point for NAD(+).

The protein belongs to the glyceraldehyde-3-phosphate dehydrogenase family. As to quaternary structure, homotetramer.

It localises to the cytoplasm. It catalyses the reaction D-glyceraldehyde 3-phosphate + phosphate + NADP(+) = (2R)-3-phospho-glyceroyl phosphate + NADPH + H(+). The enzyme catalyses D-glyceraldehyde 3-phosphate + phosphate + NAD(+) = (2R)-3-phospho-glyceroyl phosphate + NADH + H(+). It participates in carbohydrate degradation; glycolysis; pyruvate from D-glyceraldehyde 3-phosphate: step 1/5. The protein is Glyceraldehyde-3-phosphate dehydrogenase 2 of Methanosarcina barkeri (strain Fusaro / DSM 804).